The primary structure comprises 362 residues: Putative protein ARB2BP (362 aa).

The helical transmembrane segment at 229-245 (IAFIVHGYGGLVFMDLL) threads the bilayer.

This sequence belongs to the ARB2 family.

It is found in the membrane. The chain is Putative protein ARB2BP from Homo sapiens (Human).